Consider the following 199-residue polypeptide: FMN-dependent NADH:quinone oxidoreductase (199 aa).

17 to 19 (SYS) provides a ligand contact to FMN.

Belongs to the azoreductase type 1 family. As to quaternary structure, homodimer. FMN is required as a cofactor.

The catalysed reaction is 2 a quinone + NADH + H(+) = 2 a 1,4-benzosemiquinone + NAD(+). It catalyses the reaction N,N-dimethyl-1,4-phenylenediamine + anthranilate + 2 NAD(+) = 2-(4-dimethylaminophenyl)diazenylbenzoate + 2 NADH + 2 H(+). In terms of biological role, quinone reductase that provides resistance to thiol-specific stress caused by electrophilic quinones. Functionally, also exhibits azoreductase activity. Catalyzes the reductive cleavage of the azo bond in aromatic azo compounds to the corresponding amines. This Mycoplasmopsis synoviae (strain 53) (Mycoplasma synoviae) protein is FMN-dependent NADH:quinone oxidoreductase.